Reading from the N-terminus, the 296-residue chain is 4-diphosphocytidyl-2-C-methyl-D-erythritol kinase (296 aa).

Lys13 is an active-site residue. Position 104–114 (104–114) interacts with ATP; sequence PMGGGIGGGSS. Residue Asp146 is part of the active site.

It belongs to the GHMP kinase family. IspE subfamily.

The catalysed reaction is 4-CDP-2-C-methyl-D-erythritol + ATP = 4-CDP-2-C-methyl-D-erythritol 2-phosphate + ADP + H(+). It functions in the pathway isoprenoid biosynthesis; isopentenyl diphosphate biosynthesis via DXP pathway; isopentenyl diphosphate from 1-deoxy-D-xylulose 5-phosphate: step 3/6. In terms of biological role, catalyzes the phosphorylation of the position 2 hydroxy group of 4-diphosphocytidyl-2C-methyl-D-erythritol. This is 4-diphosphocytidyl-2-C-methyl-D-erythritol kinase from Hahella chejuensis (strain KCTC 2396).